The following is a 95-amino-acid chain: Mitochondrial import inner membrane translocase subunit Tim9 (95 aa).

Positions Cys-35–Cys-59 match the Twin CX3C motif motif. 2 cysteine pairs are disulfide-bonded: Cys-35–Cys-59 and Cys-39–Cys-55.

This sequence belongs to the small Tim family. In terms of assembly, heterohexamer; composed of 3 copies of Tim9 and 3 copies of Tim10, named soluble 70 kDa complex. The complex associates with the Tim22 component of the TIM22 complex. Interacts with multi-pass transmembrane proteins in transit.

The protein localises to the mitochondrion inner membrane. Its function is as follows. Mitochondrial intermembrane chaperone that participates in the import and insertion of multi-pass transmembrane proteins into the mitochondrial inner membrane. May also be required for the transfer of beta-barrel precursors from the TOM complex to the sorting and assembly machinery (SAM complex) of the outer membrane. Acts as a chaperone-like protein that protects the hydrophobic precursors from aggregation and guide them through the mitochondrial intermembrane space. This chain is Mitochondrial import inner membrane translocase subunit Tim9 (Tim9a), found in Drosophila melanogaster (Fruit fly).